The following is a 360-amino-acid chain: Photosystem II protein D1 1 (360 aa).

The next 3 membrane-spanning stretches (helical) occupy residues 29-46, 118-133, and 142-156; these read YVGW…AATV, HFLI…QWEL, and WICV…SATA. His-118 contacts chlorophyll a. Pheophytin a is bound at residue Tyr-126. Residues Asp-170 and Glu-189 each coordinate [CaMn4O5] cluster. A helical membrane pass occupies residues 197 to 218; the sequence is FHMLGVAGVFGGSLFSAMHGSL. Chlorophyll a is bound at residue His-198. A quinone contacts are provided by residues His-215 and 264 to 265; that span reads SF. His-215 provides a ligand contact to Fe cation. Residue His-272 coordinates Fe cation. Residues 274 to 288 traverse the membrane as a helical segment; that stretch reads FLAAWPVIGIWFTAL. Residues His-332, Glu-333, Asp-342, and Ala-344 each contribute to the [CaMn4O5] cluster site. Positions 345–360 are excised as a propeptide; the sequence is AGEVAPVALTAPAING.

It belongs to the reaction center PufL/M/PsbA/D family. PSII is composed of 1 copy each of membrane proteins PsbA, PsbB, PsbC, PsbD, PsbE, PsbF, PsbH, PsbI, PsbJ, PsbK, PsbL, PsbM, PsbT, PsbX, PsbY, PsbZ, Psb30/Ycf12, peripheral proteins PsbO, CyanoQ (PsbQ), PsbU, PsbV and a large number of cofactors. It forms dimeric complexes. The D1/D2 heterodimer binds P680, chlorophylls that are the primary electron donor of PSII, and subsequent electron acceptors. It shares a non-heme iron and each subunit binds pheophytin, quinone, additional chlorophylls, carotenoids and lipids. D1 provides most of the ligands for the Mn4-Ca-O5 cluster of the oxygen-evolving complex (OEC). There is also a Cl(-1) ion associated with D1 and D2, which is required for oxygen evolution. The PSII complex binds additional chlorophylls, carotenoids and specific lipids. serves as cofactor. Post-translationally, tyr-161 forms a radical intermediate that is referred to as redox-active TyrZ, YZ or Y-Z. C-terminally processed by CtpA; processing is essential to allow assembly of the oxygen-evolving complex and thus photosynthetic growth.

It is found in the cellular thylakoid membrane. It catalyses the reaction 2 a plastoquinone + 4 hnu + 2 H2O = 2 a plastoquinol + O2. In terms of biological role, photosystem II (PSII) is a light-driven water:plastoquinone oxidoreductase that uses light energy to abstract electrons from H(2)O, generating O(2) and a proton gradient subsequently used for ATP formation. It consists of a core antenna complex that captures photons, and an electron transfer chain that converts photonic excitation into a charge separation. The D1/D2 (PsbA/PsbD) reaction center heterodimer binds P680, the primary electron donor of PSII as well as several subsequent electron acceptors. The chain is Photosystem II protein D1 1 from Nostoc sp. (strain PCC 7120 / SAG 25.82 / UTEX 2576).